The primary structure comprises 242 residues: MSKMTKKMKKICEIKSSLKDYKFNNLISILNSFPKAKFNENIDVAINLRINTKKSDQNIRGSIILPNSIKKEKYIVVFASGEDKKNAYEAGANLAGMEEVSDKIKNNKKLKIDHVISTPEAMPIVEKLGSILGPKGLMPNPKLGTITKDIKNEIKKIKSGQLNYKNDKYGIIHTTIGKINFNNLELKINLLYFLNHLVKTKPTNLKGVFIKKVSLSTTMGGSVIINHNEFLQENNISDNIKK.

Belongs to the universal ribosomal protein uL1 family. In terms of assembly, part of the 50S ribosomal subunit.

In terms of biological role, binds directly to 23S rRNA. The L1 stalk is quite mobile in the ribosome, and is involved in E site tRNA release. Functionally, protein L1 is also a translational repressor protein, it controls the translation of the L11 operon by binding to its mRNA. This chain is Large ribosomal subunit protein uL1, found in Wigglesworthia glossinidia brevipalpis.